Here is a 601-residue protein sequence, read N- to C-terminus: Trehalose synthase/amylase TreS (601 aa).

The segment at 1 to 21 is disordered; that stretch reads MNEAEHSVEHPPVQGSHVEGG. Substrate is bound at residue D98. N140 contributes to the Ca(2+) binding site. Residues H141 and Q206 each coordinate substrate. D208 contacts Ca(2+). Substrate is bound at residue R236. D238 acts as the Nucleophile in catalysis. Y242, L243, and E245 together coordinate Ca(2+). E280 acts as the Proton donor in catalysis. Substrate-binding residues include H349 and D350.

The protein belongs to the glycosyl hydrolase 13 family. TreS subfamily. As to quaternary structure, homohexamer.

It carries out the reaction D-maltose = alpha,alpha-trehalose. The catalysed reaction is Endohydrolysis of (1-&gt;4)-alpha-D-glucosidic linkages in polysaccharides containing three or more (1-&gt;4)-alpha-linked D-glucose units.. It participates in glycan biosynthesis; glycogen biosynthesis. It functions in the pathway capsule biogenesis; capsule polysaccharide biosynthesis. Its function is as follows. Catalyzes the reversible interconversion of maltose and trehalose by transglucosylation. Also displays amylase activity, catalyzing the endohydrolysis of (1-&gt;4)-alpha-D-glucosidic linkages in glycogen and maltooligosaccharides such as maltoheptaose, to produce maltose which then can be converted to trehalose. TreS plays a key role in the utilization of trehalose for the production of glycogen and alpha-glucan via the TreS-Pep2 branch involved in the biosynthesis of maltose-1-phosphate (M1P). Might also function as a sensor and/or regulator of trehalose levels within the cell. Thus, when trehalose levels in the cell become dangerously low, TreS could expedite the conversion of glycogen to maltose via its amylase activity and then convert the maltose to trehalose; but this enzyme also could expedite or promote the conversion of trehalose to glycogen when cytoplasmic trehalose levels become too high. The sequence is that of Trehalose synthase/amylase TreS from Mycobacterium tuberculosis (strain CDC 1551 / Oshkosh).